We begin with the raw amino-acid sequence, 390 residues long: Succinyl-diaminopimelate desuccinylase (390 aa).

H75 lines the Zn(2+) pocket. Residue D77 is part of the active site. Zn(2+) is bound at residue D108. The Proton acceptor role is filled by E141. Zn(2+) is bound by residues E142, E170, and H359.

This sequence belongs to the peptidase M20A family. DapE subfamily. Homodimer. The cofactor is Zn(2+). Co(2+) serves as cofactor.

The catalysed reaction is N-succinyl-(2S,6S)-2,6-diaminopimelate + H2O = (2S,6S)-2,6-diaminopimelate + succinate. The protein operates within amino-acid biosynthesis; L-lysine biosynthesis via DAP pathway; LL-2,6-diaminopimelate from (S)-tetrahydrodipicolinate (succinylase route): step 3/3. Catalyzes the hydrolysis of N-succinyl-L,L-diaminopimelic acid (SDAP), forming succinate and LL-2,6-diaminopimelate (DAP), an intermediate involved in the bacterial biosynthesis of lysine and meso-diaminopimelic acid, an essential component of bacterial cell walls. The sequence is that of Succinyl-diaminopimelate desuccinylase from Maricaulis maris (strain MCS10) (Caulobacter maris).